The following is a 189-amino-acid chain: SAGA-associated factor 11 homolog (189 aa).

The SGF11-type zinc finger occupies 94–115 (CTCPNCDRLVAATRFAPHLEKC). A disordered region spans residues 128–189 (RRLATKEGSS…GSKKNNGKTF (62 aa)). A compositionally biased stretch (low complexity) spans 136–145 (SSASSTSTST). The residue at position 165 (Ser-165) is a Phosphoserine. Residues 175–189 (NSRNNGSKKNNGKTF) are compositionally biased toward low complexity.

Belongs to the SGF11 family. As to quaternary structure, component of some SAGA transcription coactivator-HAT complexes, at least composed of Ada2b, not/nonstop, Pcaf/Gcn5, Sgf11 and Spt3. Within the SAGA complex, Sgf11, e(y)2, and not/nonstop form an additional subcomplex of SAGA called the DUB module (deubiquitination module). Interacts directly with not/nonstop. Interacts with the AMEX complex component xmas-2. Interacts with Cbp80; important for promoter recruitment of Sgf11 that is not associated with the DUB module.

The protein resides in the nucleus. It localises to the nucleoplasm. It is found in the cytoplasm. Its function is as follows. Component of the transcription regulatory histone acetylation (HAT) complex SAGA, a multiprotein complex that activates transcription by remodeling chromatin and mediating histone acetylation and deubiquitination. Within the SAGA complex, participates in a subcomplex that specifically deubiquitinates histone H2B. The SAGA complex is recruited to specific gene promoters by activators, where it is required for transcription. Required for nuclear receptor-mediated transactivation. Binds independently on SAGA to promoters in an RNA-dependent manner. Binds to mRNA and is essential for total mRNA export from the nucleus. Required to counteract heterochromatin silencing. Controls the development of neuronal connectivity in visual system by being required for accurate axon targeting in the optic lobe. Required for expression of ecdysone-induced genes such as br/broad. This chain is SAGA-associated factor 11 homolog, found in Drosophila virilis (Fruit fly).